Consider the following 517-residue polypeptide: Cytochrome P450 monooxygenase bsc11 (517 aa).

The helical transmembrane segment at 16-33 (ALPLTCTGLIIIFAFYLS) threads the bilayer. N-linked (GlcNAc...) asparagine glycosylation is present at asparagine 204. Cysteine 448 is a binding site for heme.

The protein belongs to the cytochrome P450 family. Requires heme as cofactor.

The protein resides in the membrane. Its pathway is mycotoxin biosynthesis. Cytochrome P450 monooxygenase; part of the gene cluster that mediates the biosynthesis of the diterpene glucoside brassicicene C. In the first step of the brassicicene C biosynthesis, the bifunctional diterpene synthase bsc8 that possesses both prenyl transferase and terpene cyclase activity, converts isopentenyl diphosphate and dimethylallyl diphosphate into geranylgeranyl diphosphate (GGDP) that is further converted into fusicocca-2,10(14)-diene, the first precursor for brassicicene C. Fusicocca-2,10(14)-diene is then substrate of cytochrome P450 monooxygenase bsc1 for hydroxylation at the C-8 position. Oxidation at C-16 position to aldehyde is then catalyzed by the cytochrome P450 monooyxygenase bsc7, yielding fusicocca-2,10(14)-diene-8-beta,16-diol. Follows the isomerization of the double bond and reduction of aldehyde to alcohol catalyzed by the short-chain dehydrogenase/reductase bsc3 to yield the diol compound fusicocca-1,10(14)-diene-8 beta,16-diol. The next step is the oxidation at the C-3 position of fusicocca-2,10(14)-diene-8-beta,16-diol catalyzed by the alpha-ketoglutarate dependent dioxygenase bsc9, to produce a triol compound. Methylation of the hydroxy group at position 16 is performed by the methyltransferase bsc6. 16-O-methylation is followed by oxidation at the C-13 position to ketone and an alkyl shift of the methyl group leads to brassicicene C. Although the probable acetyltransferase bsc4 is included in the gene cluster, no acetylation reactions are necessary for brassicicene C biosynthesis. However, the fact that brassicicene E, which is a structurally related compound having an acetoxy group at position 12, was previously isolated from another strain of A.brassicicola suggests that the ATCC 96836 strain might also produce a small amount of brassicicene E. This is Cytochrome P450 monooxygenase bsc11 from Alternaria brassicicola (Dark leaf spot agent).